Here is a 736-residue protein sequence, read N- to C-terminus: Cytosolic neutral trehalase (736 aa).

The segment at 1–47 (MSEAPQARRVGSVDDHSVYDDAKTYYTSEERHNNSRSGPRQRTYSQN) is disordered. Over residues 11-33 (GSVDDHSVYDDAKTYYTSEERHN) the composition is skewed to basic and acidic residues. Positions 35-47 (SRSGPRQRTYSQN) are enriched in polar residues. The Ca(2+) site is built by D92, D94, N96, Q98, and D103. Substrate contacts are provided by residues R279, 286–287 (WD), N323, 332–334 (RSQ), E399, R448, and G451. Catalysis depends on proton donor/acceptor residues D453 and E657.

Belongs to the glycosyl hydrolase 37 family. The cofactor is Ca(2+).

It is found in the cytoplasm. The enzyme catalyses alpha,alpha-trehalose + H2O = alpha-D-glucose + beta-D-glucose. It functions in the pathway carbohydrate degradation. Functionally, hydrolyzes intracellular trehalose to glucose. Plays a role in pathogenicity, specifically in proliferation of invasive hyphae in rice blast disease. The sequence is that of Cytosolic neutral trehalase (NTH1) from Pyricularia oryzae (strain 70-15 / ATCC MYA-4617 / FGSC 8958) (Rice blast fungus).